Here is a 114-residue protein sequence, read N- to C-terminus: Probable 4-amino-4-deoxy-L-arabinose-phosphoundecaprenol flippase subunit ArnE (114 aa).

A run of 3 helical transmembrane segments spans residues 38-58, 64-84, and 94-114; these read LTLRWLAIAVVSLGLGMLLWL, LPLSVAYPMLSFNFVLVTLAA, and LRHWLGVAAIMFGILLMSWHL. The EamA domain occupies 43–112; sequence LAIAVVSLGL…IMFGILLMSW (70 aa).

The protein belongs to the ArnE family. As to quaternary structure, heterodimer of ArnE and ArnF.

The protein localises to the cell inner membrane. The protein operates within bacterial outer membrane biogenesis; lipopolysaccharide biosynthesis. Its function is as follows. Translocates 4-amino-4-deoxy-L-arabinose-phosphoundecaprenol (alpha-L-Ara4N-phosphoundecaprenol) from the cytoplasmic to the periplasmic side of the inner membrane. The protein is Probable 4-amino-4-deoxy-L-arabinose-phosphoundecaprenol flippase subunit ArnE of Yersinia pseudotuberculosis serotype O:3 (strain YPIII).